A 175-amino-acid polypeptide reads, in one-letter code: Glycine-rich RNA-binding protein 1 (175 aa).

An RRM domain is found at alanine 3 to serine 81. Residues glycine 114 to glutamine 175 form a disordered region. Over residues proline 122–tyrosine 131 the composition is skewed to low complexity. The span at proline 132 to glutamine 141 shows a compositional bias: gly residues. Over residues glutamine 142–proline 162 the composition is skewed to low complexity. Residues glutamine 163–glutamine 175 show a composition bias toward gly residues.

This sequence belongs to the glycine-rich RNA-binding protein family. As to quaternary structure, part of large ribonucleoprotein complexes (mRNPs) containing RNA-binding proteins RRM4 and PAB1, endosome-binding protein UPA1, core scaffold protein UPA2 and associated factor GRP1.

Its subcellular location is the endosome. Component of endosomal mRNA transport that regulates polarity of the infectious hyphae by transporting a broad spectrum of cargo mRNAs from the nucleus to cell poles. The polypeptide is Glycine-rich RNA-binding protein 1 (Mycosarcoma maydis (Corn smut fungus)).